The primary structure comprises 382 residues: MDNLFTFLHEIEDRYARTIFNFHLISCDEIGDIYGLMKERISSEDMFDNIVYNKDIHHAIKKLVYCDIQLTKHIINQNTYPVFNDSSQVKCCHYFDINSDNSNISSRTVEIFEREKSSLVSYIKTTNKKRKVNYGEIKKTVHGGTNANYFSGKKSDEYLSTTVRSNINQPWIKTISKRMRVDIINHSIVTRGKSSILQTIEIIFTNRTCVKIFKDSTMHIILSKDKDEKGCIHMIDKLFYVYYNLFLLFEDIIQNEYFKEVANVVNHVLTATALDEKLFLIKKMAEHDVYGVSNFKIGMFNLTFIKSLDHTVFPSLLDEDSKIKFFKGKKLNIVALRSLEDCINYVTKSENMIEMMKERSTILNSIDIETESVDRLKELLLK.

The protein belongs to the poxviruses A23 family. As to quaternary structure, heterodimer of a 45 kDa and a 32 kDa subunit.

Its function is as follows. Acts with RNA polymerase to initiate transcription from intermediate gene promoters. The protein is Intermediate transcription factor 3 large subunit (VITF3L) of Oryctolagus cuniculus (Rabbit).